The following is a 362-amino-acid chain: Inactive 2'-5' oligoadenylate synthetase 1C (362 aa).

This sequence belongs to the 2-5A synthase family. In terms of tissue distribution, expressed at highest level in brain with lesser amounts in spleen, kidney, stomach, liver, intestine, ovary, skin and testis. Not detected in lung, thymus, heart and uterus.

Its function is as follows. Does not have 2'-5'-OAS activity, but can bind double-stranded RNA. This Mus musculus (Mouse) protein is Inactive 2'-5' oligoadenylate synthetase 1C.